Here is a 282-residue protein sequence, read N- to C-terminus: Trihydroxynaphthalene reductase PfmaI (282 aa).

Isoleucine 41, asparagine 114, and arginine 147 together coordinate NADP(+). Catalysis depends on proton donor residues serine 164 and tyrosine 178. 4 residues coordinate NADP(+): tyrosine 178, lysine 182, isoleucine 211, and threonine 213. Catalysis depends on lysine 182, which acts as the Lowers pKa of active site Tyr.

Belongs to the short-chain dehydrogenases/reductases (SDR) family.

It functions in the pathway pigment biosynthesis; melanin biosynthesis. Trihydroxynaphthalene reductase involved the biosynthesis of dihydroxynaphthalene (DHN)-melanin, a bluish-green pigment forming a dark layer in the conidial wall that protects the conidia from UV radiations. The first step of the pathway is the production of the pentaketide 1,3,6,8-tetrahydroxynaphthalene (1,3,6,8-THN or T4HN) by the polyketide synthase PfmaE though condensation of acetyl-CoA with malonyl-CoA. T4HN is not stable and easily oxidizes into the stable form flaviolin. T4HN is also substrate of the hydroxynaphthalene reductase PfmaG to yield scytalone. The scytalone dehydratase PfmaJ then reduces scytalone to 1,3,8-THN. 1,3,8-THN is then substrate of the hydroxynaphthalene reductase PfmaI to yield vermelone. Vermelone is further converted by the multicopper oxidase PfmaD to 1,8-DHN. Finally the laccase PFICI_06862 transforms 1,8-DHN to DHN-melanin. The roles of the 5-oxoprolinase PfmaA and the proline iminopeptidase PfmaB within the cluster have not been elucidated yet. The protein is Trihydroxynaphthalene reductase PfmaI of Pestalotiopsis fici (strain W106-1 / CGMCC3.15140).